A 325-amino-acid chain; its full sequence is tRNA U34 carboxymethyltransferase (325 aa).

Residues Lys93, Trp107, Lys112, Gly132, Met198, Tyr202, and Arg317 each contribute to the carboxy-S-adenosyl-L-methionine site.

This sequence belongs to the class I-like SAM-binding methyltransferase superfamily. CmoB family. Homotetramer.

It catalyses the reaction carboxy-S-adenosyl-L-methionine + 5-hydroxyuridine(34) in tRNA = 5-carboxymethoxyuridine(34) in tRNA + S-adenosyl-L-homocysteine + H(+). In terms of biological role, catalyzes carboxymethyl transfer from carboxy-S-adenosyl-L-methionine (Cx-SAM) to 5-hydroxyuridine (ho5U) to form 5-carboxymethoxyuridine (cmo5U) at position 34 in tRNAs. In Desulforapulum autotrophicum (strain ATCC 43914 / DSM 3382 / VKM B-1955 / HRM2) (Desulfobacterium autotrophicum), this protein is tRNA U34 carboxymethyltransferase.